Here is a 214-residue protein sequence, read N- to C-terminus: ER lumen protein-retaining receptor 3 (214 aa).

Residues 1 to 4 are Lumenal-facing; sequence MNIF. Residues 5–24 form a helical membrane-spanning segment; the sequence is RILGDVSHLLAIIILLLKMW. Residues 25-32 lie on the Cytoplasmic side of the membrane; it reads KSKSCAGI. Residues 33-52 form a helical membrane-spanning segment; sequence SGKSQLLFALVFTTRYLDLF. The segment at 47–48 is interaction with the K-D-E-L motif on target proteins; the sequence is RY. The Lumenal portion of the chain corresponds to 53 to 58; the sequence is TVFISP. Residues 59 to 79 traverse the membrane as a helical segment; the sequence is YNTVMKIIFLACAYVTVYLIY. The Cytoplasmic portion of the chain corresponds to 80–92; that stretch reads GKLRKSYDSENDT. The chain crosses the membrane as a helical span at residues 93 to 110; that stretch reads FRLEFLLVPVIGLSFLEN. Topologically, residues 111-116 are lumenal; sequence YEFTPL. The helical transmembrane segment at 117 to 135 threads the bilayer; it reads EILWTFSIYLESVAILPQL. Over 136 to 149 the chain is Cytoplasmic; sequence FMISKTGEAESITT. A helical membrane pass occupies residues 150-168; the sequence is HYLFFLGLYRVLYLANWIW. The interval 159–169 is interaction with the K-D-E-L motif on target proteins; sequence RVLYLANWIWR. The Lumenal segment spans residues 169–178; sequence RYHTEKFYDQ. A helical membrane pass occupies residues 179–199; that stretch reads IAVVSGVVQTIFYFDFFYLYV. Over 200-214 the chain is Cytoplasmic; it reads TKVLKGKKLSLPMPV. An important for recycling of cargo proteins with the sequence motif K-D-E-L from the Golgi to the endoplasmic reticulum region spans residues 204–207; it reads KGKK.

Belongs to the ERD2 family.

It is found in the endoplasmic reticulum membrane. Its subcellular location is the golgi apparatus membrane. It localises to the cytoplasmic vesicle. The protein resides in the COPI-coated vesicle membrane. In terms of biological role, receptor for the C-terminal sequence motif K-D-E-L that is present on endoplasmic reticulum resident proteins and that mediates their recycling from the Golgi back to the endoplasmic reticulum. This is ER lumen protein-retaining receptor 3 (kdelr3) from Xenopus laevis (African clawed frog).